A 576-amino-acid polypeptide reads, in one-letter code: Malonate--CoA ligase ACSF3, mitochondrial (576 aa).

The transit peptide at 1–83 directs the protein to the mitochondrion; sequence MLPHVVLTFR…RSLRLSQEIC (83 aa). ATP is bound by residues 202–210, Asp457, Arg471, and Lys563; that span reads TSGTTGRPK.

This sequence belongs to the ATP-dependent AMP-binding enzyme family.

It is found in the mitochondrion. The enzyme catalyses tetracosanoate + ATP + CoA = tetracosanoyl-CoA + AMP + diphosphate. The catalysed reaction is malonate + ATP + CoA = malonyl-CoA + AMP + diphosphate. Catalyzes the initial reaction in intramitochondrial fatty acid synthesis, by activating malonate and methylmalonate, but not acetate, into their respective CoA thioester. May have some preference toward very-long-chain substrates. The chain is Malonate--CoA ligase ACSF3, mitochondrial from Homo sapiens (Human).